A 670-amino-acid chain; its full sequence is DNA ligase (670 aa).

NAD(+) contacts are provided by residues 32-36 (DSEYD), 81-82 (SL), and glutamate 114. Lysine 116 serves as the catalytic N6-AMP-lysine intermediate. Residues arginine 137, glutamate 174, lysine 291, and lysine 315 each contribute to the NAD(+) site. Residues cysteine 409, cysteine 412, cysteine 427, and cysteine 433 each coordinate Zn(2+). A BRCT domain is found at 592–670 (ASENLFKDKT…EEEFLAQITR (79 aa)).

The protein belongs to the NAD-dependent DNA ligase family. LigA subfamily. The cofactor is Mg(2+). Mn(2+) serves as cofactor.

It catalyses the reaction NAD(+) + (deoxyribonucleotide)n-3'-hydroxyl + 5'-phospho-(deoxyribonucleotide)m = (deoxyribonucleotide)n+m + AMP + beta-nicotinamide D-nucleotide.. In terms of biological role, DNA ligase that catalyzes the formation of phosphodiester linkages between 5'-phosphoryl and 3'-hydroxyl groups in double-stranded DNA using NAD as a coenzyme and as the energy source for the reaction. It is essential for DNA replication and repair of damaged DNA. The chain is DNA ligase from Haemophilus influenzae (strain PittGG).